The primary structure comprises 562 residues: Dihydroxy-acid dehydratase (562 aa).

Residue aspartate 80 participates in Mg(2+) binding. Cysteine 121 contacts [2Fe-2S] cluster. Residues aspartate 122 and lysine 123 each contribute to the Mg(2+) site. Lysine 123 is modified (N6-carboxylysine). Position 194 (cysteine 194) interacts with [2Fe-2S] cluster. Glutamate 446 provides a ligand contact to Mg(2+). Catalysis depends on serine 472, which acts as the Proton acceptor.

Belongs to the IlvD/Edd family. As to quaternary structure, homodimer. Requires [2Fe-2S] cluster as cofactor. Mg(2+) is required as a cofactor.

It carries out the reaction (2R)-2,3-dihydroxy-3-methylbutanoate = 3-methyl-2-oxobutanoate + H2O. The catalysed reaction is (2R,3R)-2,3-dihydroxy-3-methylpentanoate = (S)-3-methyl-2-oxopentanoate + H2O. It functions in the pathway amino-acid biosynthesis; L-isoleucine biosynthesis; L-isoleucine from 2-oxobutanoate: step 3/4. Its pathway is amino-acid biosynthesis; L-valine biosynthesis; L-valine from pyruvate: step 3/4. Functionally, functions in the biosynthesis of branched-chain amino acids. Catalyzes the dehydration of (2R,3R)-2,3-dihydroxy-3-methylpentanoate (2,3-dihydroxy-3-methylvalerate) into 2-oxo-3-methylpentanoate (2-oxo-3-methylvalerate) and of (2R)-2,3-dihydroxy-3-methylbutanoate (2,3-dihydroxyisovalerate) into 2-oxo-3-methylbutanoate (2-oxoisovalerate), the penultimate precursor to L-isoleucine and L-valine, respectively. The protein is Dihydroxy-acid dehydratase of Staphylococcus epidermidis (strain ATCC 35984 / DSM 28319 / BCRC 17069 / CCUG 31568 / BM 3577 / RP62A).